Consider the following 181-residue polypeptide: Alkyl hydroperoxide reductase AhpD (181 aa).

Cys130 serves as the catalytic Proton donor. Cys130 and Cys133 form a disulfide bridge. The Cysteine sulfenic acid (-SOH) intermediate role is filled by Cys133.

It belongs to the AhpD family.

It catalyses the reaction N(6)-[(R)-dihydrolipoyl]-L-lysyl-[lipoyl-carrier protein] + a hydroperoxide = N(6)-[(R)-lipoyl]-L-lysyl-[lipoyl-carrier protein] + an alcohol + H2O. Functionally, antioxidant protein with alkyl hydroperoxidase activity. Required for the reduction of the AhpC active site cysteine residues and for the regeneration of the AhpC enzyme activity. The protein is Alkyl hydroperoxide reductase AhpD of Gluconacetobacter diazotrophicus (strain ATCC 49037 / DSM 5601 / CCUG 37298 / CIP 103539 / LMG 7603 / PAl5).